The primary structure comprises 495 residues: Glycogen synthase (495 aa).

An ADP-alpha-D-glucose-binding site is contributed by Lys-15.

The protein belongs to the glycosyltransferase 1 family. Bacterial/plant glycogen synthase subfamily.

It carries out the reaction [(1-&gt;4)-alpha-D-glucosyl](n) + ADP-alpha-D-glucose = [(1-&gt;4)-alpha-D-glucosyl](n+1) + ADP + H(+). It functions in the pathway glycan biosynthesis; glycogen biosynthesis. Its function is as follows. Synthesizes alpha-1,4-glucan chains using ADP-glucose. The protein is Glycogen synthase of Variovorax paradoxus (strain S110).